The primary structure comprises 101 residues: MAKTSMKAREAKRAKLVAKFASKRTELKAIIVDMNASEEARWDAVLQLQQLPRDSSPSRQRNRCNITGRPHGFLRKFGLSRIKVREHAMKGEIPGLKKASW.

It belongs to the universal ribosomal protein uS14 family. In terms of assembly, part of the 30S ribosomal subunit. Contacts proteins S3 and S10.

Its function is as follows. Binds 16S rRNA, required for the assembly of 30S particles and may also be responsible for determining the conformation of the 16S rRNA at the A site. The polypeptide is Small ribosomal subunit protein uS14 (Aeromonas hydrophila subsp. hydrophila (strain ATCC 7966 / DSM 30187 / BCRC 13018 / CCUG 14551 / JCM 1027 / KCTC 2358 / NCIMB 9240 / NCTC 8049)).